Here is a 135-residue protein sequence, read N- to C-terminus: Interleukin-5 (135 aa).

Positions 1–19 (MRVLLQLGLLALGAVCVCA) are cleaved as a signal peptide. N-linked (GlcNAc...) asparagine glycans are attached at residues N48, N77, and N91.

It belongs to the IL-5 family. In terms of assembly, homodimer; disulfide-linked. Interacts with IL5RA. Interacts with CSF2RB.

It localises to the secreted. Functionally, homodimeric cytokine expressed predominantly by T-lymphocytes and NK cells that plays an important role in the survival, differentiation, and chemotaxis of eosinophils. Also acts on activated and resting B-cells to induce immunoglobulin production, growth, and differentiation. Mechanistically, exerts its biological effects through a receptor composed of IL5RA subunit and the cytokine receptor common subunit beta/CSF2RB. Binding to the receptor leads to activation of various kinases including LYN, SYK and JAK2 and thereby propagates signals through the RAS-MAPK and JAK-STAT5 pathways respectively. The polypeptide is Interleukin-5 (IL5) (Cavia porcellus (Guinea pig)).